A 274-amino-acid polypeptide reads, in one-letter code: Dermonecrotic toxin SdSicTox-betaIIB1biii (274 aa).

His5 is an active-site residue. Mg(2+) is bound by residues Glu25 and Asp27. His41 acts as the Nucleophile in catalysis. Intrachain disulfides connect Cys45–Cys51 and Cys47–Cys190. Mg(2+) is bound at residue Asp85.

It belongs to the arthropod phospholipase D family. Class II subfamily. Mg(2+) is required as a cofactor. As to expression, expressed by the venom gland.

The protein localises to the secreted. It carries out the reaction an N-(acyl)-sphingosylphosphocholine = an N-(acyl)-sphingosyl-1,3-cyclic phosphate + choline. The catalysed reaction is an N-(acyl)-sphingosylphosphoethanolamine = an N-(acyl)-sphingosyl-1,3-cyclic phosphate + ethanolamine. The enzyme catalyses a 1-acyl-sn-glycero-3-phosphocholine = a 1-acyl-sn-glycero-2,3-cyclic phosphate + choline. It catalyses the reaction a 1-acyl-sn-glycero-3-phosphoethanolamine = a 1-acyl-sn-glycero-2,3-cyclic phosphate + ethanolamine. In terms of biological role, dermonecrotic toxins cleave the phosphodiester linkage between the phosphate and headgroup of certain phospholipids (sphingolipid and lysolipid substrates), forming an alcohol (often choline) and a cyclic phosphate. This toxin acts on sphingomyelin (SM). It may also act on ceramide phosphoethanolamine (CPE), lysophosphatidylcholine (LPC) and lysophosphatidylethanolamine (LPE), but not on lysophosphatidylserine (LPS), and lysophosphatidylglycerol (LPG). It acts by transphosphatidylation, releasing exclusively cyclic phosphate products as second products. Induces dermonecrosis, hemolysis, increased vascular permeability, edema, inflammatory response, and platelet aggregation. This Sicarius cf. damarensis (strain GJB-2008) (Six-eyed sand spider) protein is Dermonecrotic toxin SdSicTox-betaIIB1biii.